The sequence spans 285 residues: uncharacterized protein (285 aa).

The region spanning 92 to 199 (TLLLADVEES…PTINRTARLR (108 aa)) is the Guanylate cyclase domain.

Belongs to the adenylyl cyclase class-4/guanylyl cyclase family.

This is an uncharacterized protein from Mycobacterium tuberculosis (strain CDC 1551 / Oshkosh).